The chain runs to 363 residues: Cytochrome P450 CYP82D47 (363 aa).

Residue C342 participates in heme binding.

Belongs to the cytochrome P450 family. Requires heme as cofactor.

Probable heme-thiolate monooxygenase. This chain is Cytochrome P450 CYP82D47, found in Panax ginseng (Korean ginseng).